Here is a 238-residue protein sequence, read N- to C-terminus: 1-(5-phosphoribosyl)-5-[(5-phosphoribosylamino)methylideneamino] imidazole-4-carboxamide isomerase (238 aa).

Asp8 acts as the Proton acceptor in catalysis. Catalysis depends on Asp129, which acts as the Proton donor.

This sequence belongs to the HisA/HisF family.

The protein localises to the cytoplasm. The catalysed reaction is 1-(5-phospho-beta-D-ribosyl)-5-[(5-phospho-beta-D-ribosylamino)methylideneamino]imidazole-4-carboxamide = 5-[(5-phospho-1-deoxy-D-ribulos-1-ylimino)methylamino]-1-(5-phospho-beta-D-ribosyl)imidazole-4-carboxamide. The protein operates within amino-acid biosynthesis; L-histidine biosynthesis; L-histidine from 5-phospho-alpha-D-ribose 1-diphosphate: step 4/9. The polypeptide is 1-(5-phosphoribosyl)-5-[(5-phosphoribosylamino)methylideneamino] imidazole-4-carboxamide isomerase (Clostridium kluyveri (strain NBRC 12016)).